The chain runs to 168 residues: Ribosome maturation factor RimP (168 aa).

The protein belongs to the RimP family.

It is found in the cytoplasm. Functionally, required for maturation of 30S ribosomal subunits. The sequence is that of Ribosome maturation factor RimP from Bordetella parapertussis (strain 12822 / ATCC BAA-587 / NCTC 13253).